Consider the following 252-residue polypeptide: ATP synthase subunit a (252 aa).

5 consecutive transmembrane segments (helical) span residues 33 to 53 (GQVF…AFVA), 92 to 112 (VPFV…GALV), 130 to 150 (DINT…YAGL), 196 to 216 (LVVS…VMVL), and 217 to 237 (GLFT…TYIG).

Belongs to the ATPase A chain family. As to quaternary structure, F-type ATPases have 2 components, CF(1) - the catalytic core - and CF(0) - the membrane proton channel. CF(1) has five subunits: alpha(3), beta(3), gamma(1), delta(1), epsilon(1). CF(0) has four main subunits: a, b, b' and c.

It localises to the cellular thylakoid membrane. Key component of the proton channel; it plays a direct role in the translocation of protons across the membrane. This chain is ATP synthase subunit a, found in Thermosynechococcus vestitus (strain NIES-2133 / IAM M-273 / BP-1).